The chain runs to 119 residues: Large ribosomal subunit protein bL20 (119 aa).

The protein belongs to the bacterial ribosomal protein bL20 family.

Binds directly to 23S ribosomal RNA and is necessary for the in vitro assembly process of the 50S ribosomal subunit. It is not involved in the protein synthesizing functions of that subunit. In Heliobacterium modesticaldum (strain ATCC 51547 / Ice1), this protein is Large ribosomal subunit protein bL20.